A 557-amino-acid polypeptide reads, in one-letter code: Urocanate hydratase (557 aa).

Residues 52–53, Q130, 176–178, E196, R201, 242–243, 263–267, 273–274, and Y322 each bind NAD(+); these read GG, GMG, NA, QTSAH, and YL. C410 is a catalytic residue. G492 is a binding site for NAD(+).

Belongs to the urocanase family. NAD(+) serves as cofactor.

It is found in the cytoplasm. It carries out the reaction 4-imidazolone-5-propanoate = trans-urocanate + H2O. It functions in the pathway amino-acid degradation; L-histidine degradation into L-glutamate; N-formimidoyl-L-glutamate from L-histidine: step 2/3. Functionally, catalyzes the conversion of urocanate to 4-imidazolone-5-propionate. This Pseudoalteromonas translucida (strain TAC 125) protein is Urocanate hydratase.